The sequence spans 412 residues: Probable tRNA pseudouridine synthase D (412 aa).

The active-site Nucleophile is D97. In terms of domain architecture, TRUD spans 167–370 (ALPNYYGYQR…YGSYRRARLQ (204 aa)).

This sequence belongs to the pseudouridine synthase TruD family.

It carries out the reaction uridine(13) in tRNA = pseudouridine(13) in tRNA. Its function is as follows. Could be responsible for synthesis of pseudouridine from uracil-13 in transfer RNAs. The chain is Probable tRNA pseudouridine synthase D from Pyrobaculum neutrophilum (strain DSM 2338 / JCM 9278 / NBRC 100436 / V24Sta) (Thermoproteus neutrophilus).